Reading from the N-terminus, the 35-residue chain is UPF0387 membrane protein YohO (35 aa).

A helical membrane pass occupies residues 6-26 (IGVIALFLFMALGGIGGVMLA).

It belongs to the UPF0387 family.

It is found in the cell inner membrane. The polypeptide is UPF0387 membrane protein YohO (Shigella boydii serotype 4 (strain Sb227)).